The sequence spans 616 residues: Zinc metalloproteinase-disintegrin-like VLAIP-A (616 aa).

An N-terminal signal peptide occupies residues 1 to 20; the sequence is MMQVLLVTISLAVFPYQGSS. The propeptide occupies 21-194; it reads IILESGNVND…KASQLNLTPE (174 aa). Glutamine 195 bears the Pyrrolidone carboxylic acid mark. Residues 203–399 enclose the Peptidase M12B domain; it reads KYIKLVIVAD…KMPQCILNKP (197 aa). Intrachain disulfides connect cysteine 314–cysteine 394, cysteine 354–cysteine 378, and cysteine 356–cysteine 361. Residue histidine 339 coordinates Zn(2+). Glutamate 340 is a catalytic residue. Zn(2+) is bound by residues histidine 343 and histidine 349. Asparagine 377 carries N-linked (GlcNAc...) asparagine glycosylation. The Disintegrin domain occupies 407 to 493; sequence PAVCGNYLVE…ECPTDQFQRN (87 aa). 6 residues coordinate Ca(2+): valine 409, asparagine 412, leucine 414, glutamate 416, glutamate 419, and aspartate 422. Cystine bridges form between cysteine 410–cysteine 439, cysteine 421–cysteine 434, cysteine 423–cysteine 429, cysteine 433–cysteine 456, cysteine 447–cysteine 453, cysteine 452–cysteine 478, cysteine 465–cysteine 485, cysteine 472–cysteine 504, cysteine 497–cysteine 509, cysteine 516–cysteine 566, cysteine 531–cysteine 577, cysteine 544–cysteine 554, cysteine 561–cysteine 603, and cysteine 597–cysteine 609. A D/ECD-tripeptide motif is present at residues 471–473; sequence ECD.

Belongs to the venom metalloproteinase (M12B) family. P-III subfamily. P-IIIc sub-subfamily. Heterodimer; disulfide-linked. It depends on Zn(2+) as a cofactor. In terms of processing, the N-terminus is blocked. In terms of tissue distribution, expressed by the venom gland.

The protein resides in the secreted. Its activity is regulated as follows. Inhibited by EDTA or 1,10-phenanthroline. Not inhibited by PMSF. In terms of biological role, snake venom zinc metalloprotease that hydrolyzes the alpha-chain (FGA) and more slowly the beta-chain (FGB) of fibrinogen, without affecting the gamma-chain. Cleaves alpha-chain of fibrinogen at '432-Lys-|-Leu-433' and '535-Pro-|-Met-536' bonds. Induces apoptosis in vascular endothelial cells and inhibits endothelial cell adhesion to extracellular matrix proteins such as fibrinogen, fibronectin, vitronectin, collagen I, and collagen IV. Also hydrolyzes azocasein, and insulin B-chain (at the '38-Ala-|-Leu-39' bond). In Macrovipera lebetinus (Levantine viper), this protein is Zinc metalloproteinase-disintegrin-like VLAIP-A.